We begin with the raw amino-acid sequence, 591 residues long: Developmental and secondary metabolism regulator VEA1 (591 aa).

Residues 1-22 are disordered; the sequence is MATKASSILHPPNETEHTMSRI. Residues 13-22 show a composition bias toward basic and acidic residues; it reads NETEHTMSRI. Residues 26 to 235 enclose the Velvet domain; it reads GKKLTYNLKV…AEQGCRVRIR (210 aa). The short motif at 40–45 is the Nuclear localization signal element; the sequence is ERARAC. Residues 238 to 547 are disordered; sequence VRMRRREPKP…TSGGSDDEIM (310 aa). Residues 245–260 are compositionally biased toward basic and acidic residues; that stretch reads PKPNKDYGAYDDRRIT. A compositionally biased stretch (polar residues) spans 306–321; sequence HQQPSPNLAATPQSHL. Positions 330 to 347 are enriched in pro residues; the sequence is YHAPPPPPTAHPAPPPAY. Residues 386–395 are compositionally biased toward polar residues; sequence YDQSKSSLPM. Positions 422–433 are enriched in low complexity; that stretch reads PSQLHPTQQYQQ. Residues 434–448 are compositionally biased toward pro residues; the sequence is PTPPPPPPAAIAPHP. The segment at 452 to 493 is PEST; that stretch reads RTPTKPSPSTFFPPTPSRLSVEVDSSNEADDAILNAIRTRRG. The segment covering 494-516 has biased composition (basic and acidic residues); that stretch reads YILDEKSGATKRSRDSSDHDLKP.

It belongs to the velvet family. VeA subfamily. Component of the heterotrimeric velvet complex composed of LAE1, VEA1 and VEL2; VEA1 acting as a bridging protein between LAE1 and VEL2.

The protein localises to the nucleus. It is found in the cytoplasm. In terms of biological role, component of the velvet transcription factor complex that controls sexual/asexual developmental ratio in response to light, promoting sexual development in the darkness while stimulating asexual sporulation under illumination. The velvet complex hat acts as a global regulator for secondary metabolite gene expression. Regulates cleistothecial formation and hyphal growth. Acts as a positive regulator of virulence. The polypeptide is Developmental and secondary metabolism regulator VEA1 (Ajellomyces capsulatus (Darling's disease fungus)).